We begin with the raw amino-acid sequence, 117 residues long: MTRIRRGYIARRRRTKIRLFTSSFRGAHSRLTRTMIQQKIKALFSAYRDRDRHKRNFRCLWVTRINAAIRENGVSYSYSTLINNLYKRQLLLNRKILAQLAILNRNCLYLISNDMIK.

This sequence belongs to the bacterial ribosomal protein bL20 family.

Its subcellular location is the plastid. The protein localises to the chloroplast. Its function is as follows. Binds directly to 23S ribosomal RNA and is necessary for the in vitro assembly process of the 50S ribosomal subunit. It is not involved in the protein synthesizing functions of that subunit. This is Large ribosomal subunit protein bL20c from Populus trichocarpa (Western balsam poplar).